A 191-amino-acid polypeptide reads, in one-letter code: Lipid A acyltransferase PagP (191 aa).

A signal peptide spans 1-26; the sequence is MLKVNKYVILIIAFVSQMMFSTTAQA. Catalysis depends on residues His-63, Asp-106, and Ser-107.

This sequence belongs to the lipid A palmitoyltransferase family. Homodimer.

It localises to the cell outer membrane. The enzyme catalyses a lipid A + a 1,2-diacyl-sn-glycero-3-phosphocholine = a hepta-acyl lipid A + a 2-acyl-sn-glycero-3-phosphocholine. The catalysed reaction is a lipid IVA + a 1,2-diacyl-sn-glycero-3-phosphocholine = a lipid IVB + a 2-acyl-sn-glycero-3-phosphocholine. It carries out the reaction a lipid IIA + a 1,2-diacyl-sn-glycero-3-phosphocholine = a lipid IIB + a 2-acyl-sn-glycero-3-phosphocholine. In terms of biological role, transfers a fatty acid residue from the sn-1 position of a phospholipid to the N-linked hydroxyfatty acid chain on the proximal unit of lipid A or its precursors. The polypeptide is Lipid A acyltransferase PagP (Enterobacter lignolyticus (strain SCF1)).